Consider the following 311-residue polypeptide: tRNA dimethylallyltransferase (311 aa).

Position 10-17 (10-17 (GPTAVGKS)) interacts with ATP. 12 to 17 (TAVGKS) is a binding site for substrate. The tract at residues 35–38 (DSMQ) is interaction with substrate tRNA.

The protein belongs to the IPP transferase family. Monomer. Mg(2+) is required as a cofactor.

The enzyme catalyses adenosine(37) in tRNA + dimethylallyl diphosphate = N(6)-dimethylallyladenosine(37) in tRNA + diphosphate. In terms of biological role, catalyzes the transfer of a dimethylallyl group onto the adenine at position 37 in tRNAs that read codons beginning with uridine, leading to the formation of N6-(dimethylallyl)adenosine (i(6)A). In Carboxydothermus hydrogenoformans (strain ATCC BAA-161 / DSM 6008 / Z-2901), this protein is tRNA dimethylallyltransferase.